The chain runs to 178 residues: Ribosome maturation factor RimM (178 aa).

The PRC barrel domain occupies 101 to 178 (ADEYYWYQLV…VMRVEWDADF (78 aa)).

It belongs to the RimM family. In terms of assembly, binds ribosomal protein uS19.

It localises to the cytoplasm. Its function is as follows. An accessory protein needed during the final step in the assembly of 30S ribosomal subunit, possibly for assembly of the head region. Essential for efficient processing of 16S rRNA. May be needed both before and after RbfA during the maturation of 16S rRNA. It has affinity for free ribosomal 30S subunits but not for 70S ribosomes. The chain is Ribosome maturation factor RimM from Pseudomonas putida (strain ATCC 47054 / DSM 6125 / CFBP 8728 / NCIMB 11950 / KT2440).